The primary structure comprises 56 residues: Small ribosomal subunit protein uS14 (56 aa).

Zn(2+)-binding residues include cysteine 21, cysteine 24, cysteine 39, and cysteine 42.

It belongs to the universal ribosomal protein uS14 family. Component of the 40S small ribosomal subunit. Zn(2+) serves as cofactor.

The protein resides in the cytoplasm. It is found in the cytosol. It localises to the rough endoplasmic reticulum. The chain is Small ribosomal subunit protein uS14 (RpS29) from Plutella xylostella (Diamondback moth).